Here is a 209-residue protein sequence, read N- to C-terminus: LexA repressor (209 aa).

The segment at residues 32 to 52 (VREIGKAVDLSSTSTVHGHLA) is a DNA-binding region (H-T-H motif). Residues Ser-131 and Lys-169 each act as for autocatalytic cleavage activity in the active site.

Belongs to the peptidase S24 family. In terms of assembly, homodimer.

It carries out the reaction Hydrolysis of Ala-|-Gly bond in repressor LexA.. Functionally, represses a number of genes involved in the response to DNA damage (SOS response), including recA and lexA. In the presence of single-stranded DNA, RecA interacts with LexA causing an autocatalytic cleavage which disrupts the DNA-binding part of LexA, leading to derepression of the SOS regulon and eventually DNA repair. This chain is LexA repressor, found in Enterococcus faecalis (strain ATCC 700802 / V583).